A 456-amino-acid polypeptide reads, in one-letter code: Arginine biosynthesis bifunctional protein ArgJ, mitochondrial (456 aa).

The substrate site is built by Thr-184, Lys-213, Thr-224, Glu-311, Asn-451, and Thr-456. Catalysis depends on Thr-224, which acts as the Nucleophile.

Belongs to the ArgJ family. In terms of assembly, heterodimer of an alpha and a beta chain. The alpha and beta chains are autoproteolytically processed from a single precursor protein within the mitochondrion.

The protein localises to the mitochondrion matrix. The enzyme catalyses N(2)-acetyl-L-ornithine + L-glutamate = N-acetyl-L-glutamate + L-ornithine. It catalyses the reaction L-glutamate + acetyl-CoA = N-acetyl-L-glutamate + CoA + H(+). The protein operates within amino-acid biosynthesis; L-arginine biosynthesis; L-ornithine and N-acetyl-L-glutamate from L-glutamate and N(2)-acetyl-L-ornithine (cyclic): step 1/1. It functions in the pathway amino-acid biosynthesis; L-arginine biosynthesis; N(2)-acetyl-L-ornithine from L-glutamate: step 1/4. Catalyzes two activities which are involved in the cyclic version of arginine biosynthesis: the synthesis of acetylglutamate from glutamate and acetyl-CoA, and of ornithine by transacetylation between acetylornithine and glutamate. The sequence is that of Arginine biosynthesis bifunctional protein ArgJ, mitochondrial from Aspergillus oryzae (strain ATCC 42149 / RIB 40) (Yellow koji mold).